A 374-amino-acid chain; its full sequence is Pectate lyase 2 (374 aa).

The first 22 residues, M1–A22, serve as a signal peptide directing secretion. A disulfide bridge connects residues C93 and C176. Ca(2+) contacts are provided by D150, D152, E187, and D191. R239 is a catalytic residue. C350 and C373 are joined by a disulfide.

Belongs to the polysaccharide lyase 1 family. PLADES subfamily. The cofactor is Ca(2+).

It localises to the secreted. It catalyses the reaction Eliminative cleavage of (1-&gt;4)-alpha-D-galacturonan to give oligosaccharides with 4-deoxy-alpha-D-galact-4-enuronosyl groups at their non-reducing ends.. It participates in glycan metabolism; pectin degradation; 2-dehydro-3-deoxy-D-gluconate from pectin: step 2/5. Functionally, involved in maceration and soft-rotting of plant tissue. This Pectobacterium carotovorum (Erwinia carotovora) protein is Pectate lyase 2 (pel2).